The primary structure comprises 374 residues: Queuine tRNA-ribosyltransferase (374 aa).

The active-site Proton acceptor is aspartate 89. Substrate-binding positions include 89–93, aspartate 143, glutamine 187, and glycine 214; that span reads DSGGF. The RNA binding stretch occupies residues 245 to 251; the sequence is GVGKPED. The active-site Nucleophile is aspartate 264. Positions 269-273 are RNA binding; important for wobble base 34 recognition; sequence TRNAR. Zn(2+)-binding residues include cysteine 302, cysteine 304, cysteine 307, and histidine 333.

Belongs to the queuine tRNA-ribosyltransferase family. In terms of assembly, homodimer. Within each dimer, one monomer is responsible for RNA recognition and catalysis, while the other monomer binds to the replacement base PreQ1. The cofactor is Zn(2+).

It carries out the reaction 7-aminomethyl-7-carbaguanine + guanosine(34) in tRNA = 7-aminomethyl-7-carbaguanosine(34) in tRNA + guanine. The protein operates within tRNA modification; tRNA-queuosine biosynthesis. Catalyzes the base-exchange of a guanine (G) residue with the queuine precursor 7-aminomethyl-7-deazaguanine (PreQ1) at position 34 (anticodon wobble position) in tRNAs with GU(N) anticodons (tRNA-Asp, -Asn, -His and -Tyr). Catalysis occurs through a double-displacement mechanism. The nucleophile active site attacks the C1' of nucleotide 34 to detach the guanine base from the RNA, forming a covalent enzyme-RNA intermediate. The proton acceptor active site deprotonates the incoming PreQ1, allowing a nucleophilic attack on the C1' of the ribose to form the product. After dissociation, two additional enzymatic reactions on the tRNA convert PreQ1 to queuine (Q), resulting in the hypermodified nucleoside queuosine (7-(((4,5-cis-dihydroxy-2-cyclopenten-1-yl)amino)methyl)-7-deazaguanosine). This is Queuine tRNA-ribosyltransferase from Shewanella sp. (strain W3-18-1).